We begin with the raw amino-acid sequence, 188 residues long: ATP-dependent Clp protease proteolytic subunit 1 (188 aa).

Serine 90 (nucleophile) is an active-site residue. Residue histidine 115 is part of the active site.

The protein belongs to the peptidase S14 family. As to quaternary structure, fourteen ClpP subunits assemble into 2 heptameric rings which stack back to back to give a disk-like structure with a central cavity, resembling the structure of eukaryotic proteasomes.

It is found in the cytoplasm. It catalyses the reaction Hydrolysis of proteins to small peptides in the presence of ATP and magnesium. alpha-casein is the usual test substrate. In the absence of ATP, only oligopeptides shorter than five residues are hydrolyzed (such as succinyl-Leu-Tyr-|-NHMec, and Leu-Tyr-Leu-|-Tyr-Trp, in which cleavage of the -Tyr-|-Leu- and -Tyr-|-Trp bonds also occurs).. Functionally, cleaves peptides in various proteins in a process that requires ATP hydrolysis. Has a chymotrypsin-like activity. Plays a major role in the degradation of misfolded proteins. This chain is ATP-dependent Clp protease proteolytic subunit 1, found in Corynebacterium jeikeium (strain K411).